The following is a 719-amino-acid chain: Translation factor guf1, mitochondrial (719 aa).

A mitochondrion-targeting transit peptide spans methionine 1–leucine 75. One can recognise a tr-type G domain in the interval glutamate 119–valine 301. Residues alanine 128–serine 135, aspartate 194–histidine 198, and asparagine 248–aspartate 251 contribute to the GTP site.

Belongs to the TRAFAC class translation factor GTPase superfamily. Classic translation factor GTPase family. LepA subfamily.

It is found in the mitochondrion inner membrane. It catalyses the reaction GTP + H2O = GDP + phosphate + H(+). Its function is as follows. Promotes mitochondrial protein synthesis. May act as a fidelity factor of the translation reaction, by catalyzing a one-codon backward translocation of tRNAs on improperly translocated ribosomes. Binds to mitochondrial ribosomes in a GTP-dependent manner. The polypeptide is Translation factor guf1, mitochondrial (guf1) (Neurospora crassa (strain ATCC 24698 / 74-OR23-1A / CBS 708.71 / DSM 1257 / FGSC 987)).